A 217-amino-acid polypeptide reads, in one-letter code: Putative 3-methyladenine DNA glycosylase (217 aa).

The 41-residue stretch at 105–145 (SHNNVYTIDTAKIKSQITDEKTQSIIIRKNRRIMKFYIPNL) folds into the RPE2 insert domain.

This sequence belongs to the DNA glycosylase MPG family.

In Rickettsia prowazekii (strain Madrid E), this protein is Putative 3-methyladenine DNA glycosylase.